The sequence spans 40 residues: Cytolysin EnT (40 aa).

The plays an important role in the hemolytic activity stretch occupies residues 3–12 (ALAGTIIEGA). An N-terminal region region spans residues 11–30 (GASLTFSVLTTILDALGSVS).

This sequence belongs to the actinoporin family. Sea anemone subfamily. As to quaternary structure, octamer or nonamer in membranes. Monomer in the soluble state.

It localises to the secreted. It is found in the nematocyst. The protein resides in the target cell membrane. Pore-forming protein that forms cations-selective hydrophilic pores of around 1 nm and causes cytolysis. Pore formation is a multi-step process that involves specific recognition of membrane sphingomyelin (but neither cholesterol nor phosphatidylcholine) using aromatic rich region and adjacent phosphocholine (POC) binding site, firm binding to the membrane (mainly driven by hydrophobic interactions) accompanied by the transfer of the N-terminal region to the lipid-water interface and finally pore formation after oligomerization of monomers. This toxin shows hemolytic activities. In Entacmaea quadricolor (Bubble-tip anemone), this protein is Cytolysin EnT.